The following is a 179-amino-acid chain: Inner membrane-spanning protein YciB (179 aa).

Helical transmembrane passes span 24 to 44 (TATG…YAME), 49 to 69 (AMQK…LVLH), 76 to 96 (WKPT…LWAL), 121 to 141 (VAWI…AAYF), and 151 to 171 (LWGY…ISPH).

Belongs to the YciB family.

It is found in the cell inner membrane. Functionally, plays a role in cell envelope biogenesis, maintenance of cell envelope integrity and membrane homeostasis. The sequence is that of Inner membrane-spanning protein YciB from Variovorax paradoxus (strain S110).